The sequence spans 123 residues: WAP four-disulfide core domain protein 5 (123 aa).

Residues 1–24 (MRIQSLLLLGALLAVGSQLPAVFG) form the signal peptide. WAP domains lie at 27-73 (KGEK…CVPR) and 74-121 (VSVK…RDPA). 8 cysteine pairs are disulfide-bonded: Cys-34–Cys-62, Cys-41–Cys-66, Cys-49–Cys-61, Cys-55–Cys-70, Cys-81–Cys-109, Cys-88–Cys-113, Cys-96–Cys-108, and Cys-102–Cys-117.

It localises to the secreted. Functionally, putative acid-stable proteinase inhibitor. The sequence is that of WAP four-disulfide core domain protein 5 (WFDC5) from Papio anubis (Olive baboon).